Consider the following 420-residue polypeptide: Fasciclin-like arabinogalactan protein 4 (420 aa).

The first 28 residues, 1–28 (MANVISISHFTLLALPYLLLLLSSTAAA), serve as a signal peptide directing secretion. FAS1 domains follow at residues 29 to 177 (INVT…DSLI) and 205 to 351 (GINL…SKVL). Asn30, Asn40, Asn135, Asn154, Asn167, Asn207, Asn312, and Asn317 each carry an N-linked (GlcNAc...) asparagine glycan. The segment at 360–388 (SGQPVATAPPQEISLSPESSSEQPSRLVS) is disordered. The span at 368–384 (PPQEISLSPESSSEQPS) shows a compositional bias: low complexity. Ser396 carries the GPI-anchor amidated serine lipid modification. Positions 397-420 (GAVKRPLGFLVLWCWCIAFCYVLV) are cleaved as a propeptide — removed in mature form.

The protein belongs to the fasciclin-like AGP family. As to expression, expressed in all plant organs and tissues, including guard cells in the leaf.

It is found in the cell membrane. Functionally, may be a cell surface adhesion protein that is required for normal cell expansion. The polypeptide is Fasciclin-like arabinogalactan protein 4 (FLA4) (Arabidopsis thaliana (Mouse-ear cress)).